Consider the following 313-residue polypeptide: Homoserine O-succinyltransferase (313 aa).

Catalysis depends on Cys142, which acts as the Acyl-thioester intermediate. Residues Lys163 and Ser192 each contribute to the substrate site. The active-site Proton acceptor is His235. Glu237 is an active-site residue. Substrate is bound at residue Arg249.

This sequence belongs to the MetA family.

Its subcellular location is the cytoplasm. The catalysed reaction is L-homoserine + succinyl-CoA = O-succinyl-L-homoserine + CoA. It functions in the pathway amino-acid biosynthesis; L-methionine biosynthesis via de novo pathway; O-succinyl-L-homoserine from L-homoserine: step 1/1. Functionally, transfers a succinyl group from succinyl-CoA to L-homoserine, forming succinyl-L-homoserine. The sequence is that of Homoserine O-succinyltransferase from Shewanella baltica (strain OS223).